A 509-amino-acid chain; its full sequence is Coiled-coil domain-containing protein 181 (509 aa).

Residues 58–82 are compositionally biased toward basic and acidic residues; that stretch reads VIEHTKQHSDPDKSLQDEVSPRKND. 3 disordered regions span residues 58 to 120, 241 to 332, and 345 to 367; these read VIEH…EEED, PINN…VTST, and QLEQ…EEKE. Polar residues-rich tracts occupy residues 243 to 266 and 300 to 332; these read NNAN…SVSG and TCPS…VTST. Residues 335–375 are a coiled coil; sequence LSPRQKELQKQLEQKREKLKREEERRKIEEEKEKKRENDIV.

This sequence belongs to the CCDC181 family. As to quaternary structure, homodimer. Interacts with HOOK1. Interacts with HOOK2. Interacts with HOOK3.

The protein localises to the cytoplasm. Its subcellular location is the cytoskeleton. It localises to the cell projection. It is found in the cilium. The protein resides in the flagellum. Functionally, microtubule-binding protein that localizes to the microtubular manchette of elongating spermatids. In Pongo abelii (Sumatran orangutan), this protein is Coiled-coil domain-containing protein 181.